Consider the following 431-residue polypeptide: MAQFYSAKRRVTTRQIITVKVNDLDSFGQGVARHNGKALFIPGLLPEESAEVIITEDKKQFARARVSRRLNDSPERETPRCPHFGVCGGCQQQHVSIALQQRSKSAALARLMKHEVNDIIAGAPWGYRRRARLSLNCPPDKPLQMGFRKAGSSDIVNVEQCPVLAPQLAALLPRIRACLASLHGTRHLGHVELVQAGSGTLMILRHTAPLSAADKEKLERFSHSEGLSLFLAPFSEILETVSGEAPWYDSHGLRLAFSPRDFIQVNEAVNQQMVARALEWLDVRAEDRVLDLFCGMGNFTLPLATRAASVIGVEGVPALVEKGRENAIRNGLHNVTFFHENLEEDVTKQPWAKNGFDKVLLDPARAGATGVMRHIIKLKPIRIVYVSCNPATLARDSEALVNAGYEVTRLAMLDMFPHTGHLESMVLFERM.

The 59-residue stretch at 10-68 folds into the TRAM domain; that stretch reads RVTTRQIITVKVNDLDSFGQGVARHNGKALFIPGLLPEESAEVIITEDKKQFARARVSR. [4Fe-4S] cluster contacts are provided by Cys-81, Cys-87, Cys-90, and Cys-161. S-adenosyl-L-methionine-binding residues include Gln-264, Phe-293, Asn-298, Glu-314, Asn-341, and Asp-362. Cys-388 serves as the catalytic Nucleophile.

Belongs to the class I-like SAM-binding methyltransferase superfamily. RNA M5U methyltransferase family. RlmD subfamily.

It catalyses the reaction uridine(1939) in 23S rRNA + S-adenosyl-L-methionine = 5-methyluridine(1939) in 23S rRNA + S-adenosyl-L-homocysteine + H(+). Functionally, catalyzes the formation of 5-methyl-uridine at position 1939 (m5U1939) in 23S rRNA. The sequence is that of 23S rRNA (uracil(1939)-C(5))-methyltransferase RlmD from Salmonella typhimurium (strain LT2 / SGSC1412 / ATCC 700720).